Here is a 135-residue protein sequence, read N- to C-terminus: S-adenosylmethionine decarboxylase proenzyme (135 aa).

The Schiff-base intermediate with substrate; via pyruvic acid role is filled by serine 63. Serine 63 carries the post-translational modification Pyruvic acid (Ser); by autocatalysis. The active-site Proton acceptor; for processing activity is the histidine 68. Residue cysteine 83 is the Proton donor; for catalytic activity of the active site.

Belongs to the prokaryotic AdoMetDC family. Type 1 subfamily. In terms of assembly, heterotetramer of two alpha and two beta chains arranged as a dimer of alpha/beta heterodimers. Pyruvate serves as cofactor. Post-translationally, is synthesized initially as an inactive proenzyme. Formation of the active enzyme involves a self-maturation process in which the active site pyruvoyl group is generated from an internal serine residue via an autocatalytic post-translational modification. Two non-identical subunits are generated from the proenzyme in this reaction, and the pyruvate is formed at the N-terminus of the alpha chain, which is derived from the carboxyl end of the proenzyme. The post-translation cleavage follows an unusual pathway, termed non-hydrolytic serinolysis, in which the side chain hydroxyl group of the serine supplies its oxygen atom to form the C-terminus of the beta chain, while the remainder of the serine residue undergoes an oxidative deamination to produce ammonia and the pyruvoyl group blocking the N-terminus of the alpha chain.

The enzyme catalyses S-adenosyl-L-methionine + H(+) = S-adenosyl 3-(methylsulfanyl)propylamine + CO2. It participates in amine and polyamine biosynthesis; S-adenosylmethioninamine biosynthesis; S-adenosylmethioninamine from S-adenosyl-L-methionine: step 1/1. In terms of biological role, catalyzes the decarboxylation of S-adenosylmethionine to S-adenosylmethioninamine (dcAdoMet), the propylamine donor required for the synthesis of the polyamines spermine and spermidine from the diamine putrescine. The chain is S-adenosylmethionine decarboxylase proenzyme from Thermodesulfovibrio yellowstonii (strain ATCC 51303 / DSM 11347 / YP87).